The primary structure comprises 488 residues: MGADIGFIGLAVMGENLVLNIERNGFSVAVFNRTTTVVDRFLAGRAHGKRITGAHSIAELVSLLARPRKIMLMVKAGSAVDAVIDQILPLLEKGDLVIDGGNSHYQDTIRRMHALEAAGIHFIGTGVSGGEEGALRGPSLMPGGSAQAWPLVSPIFCAIAAKADDGTPCCDWVGSDGAGHYVKMIHNGIEYGDMQIIAEGYWFMKHALGMSYEHMHHTFTRWNTGRLHSYLIEITAAILAHQDTDGTPLLEKILDAAGQKGTGRWTCVAALEEGSPLTLITESVMARSLSAQKQARCKAHRVFGSPVKVSKAETLSAQQREELVSALEDALYCAKIVSYAQGFELLSHTAKRRGWTLDFSRIASLWRGGCIIRSGFLSKISAAFAQQHDLENLVLAPFFAEELKRACPGWRTIVAESVRQALPVPALSAALAWFDGFTGAALPANLLQAQRDYFGAHTYERTDAPRGEFFHTNWTGTGGDTIAGTYSI.

Residues 9 to 14, 32 to 34, 74 to 76, and Asn102 contribute to the NADP(+) site; these read GLAVMG, NRT, and VKA. Substrate-binding positions include Asn102 and 128–130; that span reads SGG. Lys183 serves as the catalytic Proton acceptor. 186–187 contacts substrate; that stretch reads HN. The active-site Proton donor is the Glu190. Residues Tyr191, Lys260, Arg287, Arg451, and His457 each coordinate substrate.

It belongs to the 6-phosphogluconate dehydrogenase family. As to quaternary structure, homodimer.

It carries out the reaction 6-phospho-D-gluconate + NADP(+) = D-ribulose 5-phosphate + CO2 + NADPH. It functions in the pathway carbohydrate degradation; pentose phosphate pathway; D-ribulose 5-phosphate from D-glucose 6-phosphate (oxidative stage): step 3/3. Its function is as follows. Catalyzes the oxidative decarboxylation of 6-phosphogluconate to ribulose 5-phosphate and CO(2), with concomitant reduction of NADP to NADPH. This is 6-phosphogluconate dehydrogenase, decarboxylating (gnd) from Treponema pallidum (strain Nichols).